Here is a 530-residue protein sequence, read N- to C-terminus: Bifunctional purine biosynthesis protein PurH (530 aa).

The MGS-like domain maps to 1–148; sequence MENSRPIKRA…KNHKDVGIVV (148 aa).

This sequence belongs to the PurH family.

The enzyme catalyses (6R)-10-formyltetrahydrofolate + 5-amino-1-(5-phospho-beta-D-ribosyl)imidazole-4-carboxamide = 5-formamido-1-(5-phospho-D-ribosyl)imidazole-4-carboxamide + (6S)-5,6,7,8-tetrahydrofolate. It catalyses the reaction IMP + H2O = 5-formamido-1-(5-phospho-D-ribosyl)imidazole-4-carboxamide. The protein operates within purine metabolism; IMP biosynthesis via de novo pathway; 5-formamido-1-(5-phospho-D-ribosyl)imidazole-4-carboxamide from 5-amino-1-(5-phospho-D-ribosyl)imidazole-4-carboxamide (10-formyl THF route): step 1/1. It participates in purine metabolism; IMP biosynthesis via de novo pathway; IMP from 5-formamido-1-(5-phospho-D-ribosyl)imidazole-4-carboxamide: step 1/1. This is Bifunctional purine biosynthesis protein PurH from Psychromonas ingrahamii (strain DSM 17664 / CCUG 51855 / 37).